A 570-amino-acid polypeptide reads, in one-letter code: Phosphoglucomutase 1 (570 aa).

Ser-2 is subject to N-acetylserine. Residues Arg-24 and Ser-120 each coordinate alpha-D-glucose 1,6-bisphosphate. The active-site Phosphoserine intermediate is the Ser-120. Residues Ser-120, Asp-291, Asp-293, and Asp-295 each contribute to the Mg(2+) site. Phosphoserine is present on Ser-120. Alpha-D-glucose 1,6-bisphosphate contacts are provided by Asp-295, Arg-296, Thr-360, Glu-379, Ser-381, and Lys-392.

Belongs to the phosphohexose mutase family. In terms of assembly, monomer. It depends on Mg(2+) as a cofactor.

It localises to the cytoplasm. The catalysed reaction is alpha-D-glucose 1-phosphate = alpha-D-glucose 6-phosphate. It catalyses the reaction O-phospho-L-seryl-[protein] + alpha-D-glucose 1-phosphate = alpha-D-glucose 1,6-bisphosphate + L-seryl-[protein]. It carries out the reaction alpha-D-glucose 1,6-bisphosphate + L-seryl-[protein] = O-phospho-L-seryl-[protein] + alpha-D-glucose 6-phosphate. In terms of biological role, minor phosphoglucomutase isozyme that catalyzes the reversible interconversion of alpha-D-glucose 1-phosphate and alpha-D-glucose 6-phosphate. The mechanism proceeds via the intermediate compound alpha-D-glucose 1,6-bisphosphate. Constitutes about 10-20% of the phosphoglucomutase activity in the cell. Key enzyme in hexose metabolism. The forward reaction is an essential step in the energy metabolism of galactose since the product of the galactose pathway enzymes in yeast is glucose 1-phosphate. The reverse reaction is an essential step for biosynthesis when carbon sources other than galactose are the energy source because glucose 1-phosphate is the starting point for the synthesis of UDP-glucose, which acts as a precursor for the synthesis of oligosaccharides and trehalose. The protein is Phosphoglucomutase 1 of Saccharomyces cerevisiae (strain ATCC 204508 / S288c) (Baker's yeast).